A 368-amino-acid polypeptide reads, in one-letter code: Nicotinate-nucleotide--dimethylbenzimidazole phosphoribosyltransferase (368 aa).

The active-site Proton acceptor is the glutamate 314. Residues 344 to 368 (DRADGADNSADSGASAGTVASDPTV) are disordered. A compositionally biased stretch (low complexity) spans 349 to 360 (ADNSADSGASAG).

It belongs to the CobT family.

It carries out the reaction 5,6-dimethylbenzimidazole + nicotinate beta-D-ribonucleotide = alpha-ribazole 5'-phosphate + nicotinate + H(+). Its pathway is nucleoside biosynthesis; alpha-ribazole biosynthesis; alpha-ribazole from 5,6-dimethylbenzimidazole: step 1/2. Functionally, catalyzes the synthesis of alpha-ribazole-5'-phosphate from nicotinate mononucleotide (NAMN) and 5,6-dimethylbenzimidazole (DMB). The protein is Nicotinate-nucleotide--dimethylbenzimidazole phosphoribosyltransferase of Corynebacterium efficiens (strain DSM 44549 / YS-314 / AJ 12310 / JCM 11189 / NBRC 100395).